Here is a 236-residue protein sequence, read N- to C-terminus: 7-cyano-7-deazaguanine synthase (236 aa).

7–17 (CSGGLDSVSLA) provides a ligand contact to ATP. Cysteine 185, cysteine 193, cysteine 196, and cysteine 199 together coordinate Zn(2+).

The protein belongs to the QueC family. The cofactor is Zn(2+).

The catalysed reaction is 7-carboxy-7-deazaguanine + NH4(+) + ATP = 7-cyano-7-deazaguanine + ADP + phosphate + H2O + H(+). The protein operates within purine metabolism; 7-cyano-7-deazaguanine biosynthesis. In terms of biological role, catalyzes the ATP-dependent conversion of 7-carboxy-7-deazaguanine (CDG) to 7-cyano-7-deazaguanine (preQ(0)). This chain is 7-cyano-7-deazaguanine synthase, found in Rhizobium meliloti (strain 1021) (Ensifer meliloti).